The primary structure comprises 257 residues: Tryptophan synthase alpha chain (257 aa).

Active-site proton acceptor residues include Glu51 and Asp62.

This sequence belongs to the TrpA family. As to quaternary structure, tetramer of two alpha and two beta chains.

It carries out the reaction (1S,2R)-1-C-(indol-3-yl)glycerol 3-phosphate + L-serine = D-glyceraldehyde 3-phosphate + L-tryptophan + H2O. It participates in amino-acid biosynthesis; L-tryptophan biosynthesis; L-tryptophan from chorismate: step 5/5. Functionally, the alpha subunit is responsible for the aldol cleavage of indoleglycerol phosphate to indole and glyceraldehyde 3-phosphate. The sequence is that of Tryptophan synthase alpha chain from Nitratidesulfovibrio vulgaris (strain DP4) (Desulfovibrio vulgaris).